Consider the following 548-residue polypeptide: DNA ligase (548 aa).

E244 serves as a coordination point for ATP. Residue K246 is the N6-AMP-lysine intermediate of the active site. ATP is bound by residues R251, R266, E295, F334, R405, and K411.

This sequence belongs to the ATP-dependent DNA ligase family. Mg(2+) is required as a cofactor.

It carries out the reaction ATP + (deoxyribonucleotide)n-3'-hydroxyl + 5'-phospho-(deoxyribonucleotide)m = (deoxyribonucleotide)n+m + AMP + diphosphate.. Functionally, DNA ligase that seals nicks in double-stranded DNA during DNA replication, DNA recombination and DNA repair. This chain is DNA ligase, found in Methanoculleus marisnigri (strain ATCC 35101 / DSM 1498 / JR1).